Reading from the N-terminus, the 453-residue chain is Lysine histidine transporter-like 1 (453 aa).

Residues 1–44 (MYIQMTDGVPPPPEQSSLDHRIDELERQKEIDDWLPITSSRNAK) are Cytoplasmic-facing. Transmembrane regions (helical) follow at residues 45 to 65 (WWYSTFHNVTAMVGAGVLGLP) and 66 to 86 (FFMAQLGWGPGIAVLILSWII). Topologically, residues 87 to 122 (TLYTLWQMVEMHEMVPGKRFDRYHELGQFAFGERLG) are cytoplasmic. A helical transmembrane segment spans residues 123 to 143 (LYIIVPQQIIVEVGVCIVYMV). At 144 to 164 (TGGQSLKKFHEIACQDCSPIR) the chain is on the extracellular side. The helical transmembrane segment at 165–185 (LSFFIMIFASSHFVLSHLPNF) threads the bilayer. Topologically, residues 186 to 187 (NS) are cytoplasmic. The chain crosses the membrane as a helical span at residues 188-208 (ISGVSLVAAVMSLSYSTIAWT). Over 209–231 (ATAAKGVQEDVQYGYKSGTTAST) the chain is Extracellular. Residues 232-252 (VLSFFTGLGGIAFAYAGHNVV) form a helical membrane-spanning segment. Residues 253–276 (LEIQATIPSTPSNPSKGPMWRGVV) are Cytoplasmic-facing. A helical membrane pass occupies residues 277-297 (VAYVVVALCYFPVALVGYGVF). Over 298–318 (GNAVLDNVLMSLETPVWAIAT) the chain is Extracellular. A helical transmembrane segment spans residues 319–339 (ANLFVVMHVIGSYQIFAMPVF). Residues 340–359 (DMVETFLVKKLNFKPSTVLR) are Cytoplasmic-facing. Residues 360–382 (FIVRNVYVALTMFIGIMIPFFGG) form a helical membrane-spanning segment. Residues 383–385 (LLA) lie on the Extracellular side of the membrane. The helical transmembrane segment at 386–408 (FFGGFAFAPTSYFLPCIMWLLIY) threads the bilayer. The Cytoplasmic portion of the chain corresponds to 409–412 (KPKR). The chain crosses the membrane as a helical span at residues 413–433 (FSLSWWTNWVCIVLGVVLMIL). The Extracellular segment spans residues 434-453 (SSIGGLRQIIIQSKDYSFFS).

It belongs to the amino acid/polyamine transporter 2 family. Amino acid/auxin permease (AAAP) (TC 2.A.18.2) subfamily.

It is found in the cell membrane. In terms of biological role, amino acid transporter. This chain is Lysine histidine transporter-like 1, found in Arabidopsis thaliana (Mouse-ear cress).